A 961-amino-acid chain; its full sequence is Probable inorganic carbon transporter subunit DabA (961 aa).

Positions 406, 408, 653, and 668 each coordinate Zn(2+).

The protein belongs to the inorganic carbon transporter (TC 9.A.2) DabA family. Forms a complex with DabB. Zn(2+) is required as a cofactor.

The protein localises to the cell inner membrane. Its function is as follows. Part of an energy-coupled inorganic carbon pump. The polypeptide is Probable inorganic carbon transporter subunit DabA (Hydrogenobaculum sp. (strain Y04AAS1)).